The following is a 376-amino-acid chain: Spermidine/putrescine import ATP-binding protein PotA (376 aa).

Positions 6-236 (INIVNVNKSF…PADTFVADFL (231 aa)) constitute an ABC transporter domain. 38 to 45 (GPSGCGKT) serves as a coordination point for ATP.

Belongs to the ABC transporter superfamily. Spermidine/putrescine importer (TC 3.A.1.11.1) family. In terms of assembly, the complex is composed of two ATP-binding proteins (PotA), two transmembrane proteins (PotB and PotC) and a solute-binding protein (PotD).

The protein localises to the cell inner membrane. It carries out the reaction ATP + H2O + polyamine-[polyamine-binding protein]Side 1 = ADP + phosphate + polyamineSide 2 + [polyamine-binding protein]Side 1.. Its function is as follows. Part of the ABC transporter complex PotABCD involved in spermidine/putrescine import. Responsible for energy coupling to the transport system. This Fusobacterium nucleatum subsp. nucleatum (strain ATCC 25586 / DSM 15643 / BCRC 10681 / CIP 101130 / JCM 8532 / KCTC 2640 / LMG 13131 / VPI 4355) protein is Spermidine/putrescine import ATP-binding protein PotA.